Here is a 342-residue protein sequence, read N- to C-terminus: Large ribosomal subunit protein uL3 (342 aa).

The disordered stretch occupies residues 1 to 22 (MGHRKLSSPRRGSAGLRPRKRA).

The protein belongs to the universal ribosomal protein uL3 family. As to quaternary structure, part of the 50S ribosomal subunit. Forms a cluster with proteins L14 and L24e.

Functionally, one of the primary rRNA binding proteins, it binds directly near the 3'-end of the 23S rRNA, where it nucleates assembly of the 50S subunit. This Sulfolobus acidocaldarius (strain ATCC 33909 / DSM 639 / JCM 8929 / NBRC 15157 / NCIMB 11770) protein is Large ribosomal subunit protein uL3.